Reading from the N-terminus, the 110-residue chain is Integration host factor subunit beta (110 aa).

Belongs to the bacterial histone-like protein family. As to quaternary structure, heterodimer of an alpha and a beta chain.

Its function is as follows. This protein is one of the two subunits of integration host factor, a specific DNA-binding protein that functions in genetic recombination as well as in transcriptional and translational control. The protein is Integration host factor subunit beta of Parvibaculum lavamentivorans (strain DS-1 / DSM 13023 / NCIMB 13966).